The sequence spans 95 residues: Aspartyl/glutamyl-tRNA(Asn/Gln) amidotransferase subunit C (95 aa).

Belongs to the GatC family. Heterotrimer of A, B and C subunits.

It catalyses the reaction L-glutamyl-tRNA(Gln) + L-glutamine + ATP + H2O = L-glutaminyl-tRNA(Gln) + L-glutamate + ADP + phosphate + H(+). The catalysed reaction is L-aspartyl-tRNA(Asn) + L-glutamine + ATP + H2O = L-asparaginyl-tRNA(Asn) + L-glutamate + ADP + phosphate + 2 H(+). Its function is as follows. Allows the formation of correctly charged Asn-tRNA(Asn) or Gln-tRNA(Gln) through the transamidation of misacylated Asp-tRNA(Asn) or Glu-tRNA(Gln) in organisms which lack either or both of asparaginyl-tRNA or glutaminyl-tRNA synthetases. The reaction takes place in the presence of glutamine and ATP through an activated phospho-Asp-tRNA(Asn) or phospho-Glu-tRNA(Gln). The polypeptide is Aspartyl/glutamyl-tRNA(Asn/Gln) amidotransferase subunit C (Ruegeria sp. (strain TM1040) (Silicibacter sp.)).